We begin with the raw amino-acid sequence, 478 residues long: MLO-like protein 13 (478 aa).

Over 1–10 the chain is Extracellular; that stretch reads MAEARSGSLE. Residues 11–31 form a helical membrane-spanning segment; that stretch reads YTPTWVVAFICFIIVLLSLLA. The Cytoplasmic portion of the chain corresponds to 32–60; sequence ERGLHHLGKCLKRRQQDALFEALQKLKEE. A helical transmembrane segment spans residues 61-81; the sequence is LMLLGFISLMLTVSQAAIRHI. Topologically, residues 82–145 are extracellular; it reads CVPPALVNNM…VSVEALHQLH (64 aa). Residues 146 to 166 form a helical membrane-spanning segment; that stretch reads IFIFVLAVFHVIFCASTMVLG. At 167–276 the chain is on the cytoplasmic side; it reads GARIQQWKHW…LRTLEIDFKK (110 aa). 2 helical membrane passes run 277 to 297 and 298 to 318; these read VVSISWYLWLFVVVFLLLNVG and GWNTYFWLSFLPLILLLMVGA. Over 319–360 the chain is Cytoplasmic; it reads KLEYIISSLALDVSEKRSRAEEAVITPSDELFWFHRPGIVLQ. A helical membrane pass occupies residues 361-381; that stretch reads LIHFILFQNSFEIAFFFWILF. Over 382 to 400 the chain is Extracellular; the sequence is TYGIHSCIMEKLGYLIPRL. Residues 401-421 form a helical membrane-spanning segment; sequence VMGVLVQVLCSYSTLPLYALV. Residues 422 to 478 are Cytoplasmic-facing; it reads TQMGSKFKKGIFDNVVQSTLEGWLEDTRNRGESTSEAHRIEMQPTTPESYNVQSENP. The segment at 435–456 is calmodulin-binding; the sequence is NVVQSTLEGWLEDTRNRGESTS. Basic and acidic residues predominate over residues 449 to 462; sequence RNRGESTSEAHRIE. The segment at 449-478 is disordered; sequence RNRGESTSEAHRIEMQPTTPESYNVQSENP. Polar residues predominate over residues 464–478; sequence QPTTPESYNVQSENP.

Belongs to the MLO family.

Its subcellular location is the membrane. Its function is as follows. May be involved in modulation of pathogen defense and leaf cell death. Activity seems to be regulated by Ca(2+)-dependent calmodulin binding and seems not to require heterotrimeric G proteins. The chain is MLO-like protein 13 (MLO13) from Arabidopsis thaliana (Mouse-ear cress).